We begin with the raw amino-acid sequence, 431 residues long: Histidinol dehydrogenase (431 aa).

Positions 130, 191, and 214 each coordinate NAD(+). S237, Q259, and H262 together coordinate substrate. The Zn(2+) site is built by Q259 and H262. Active-site proton acceptor residues include E327 and H328. Residues H328, D361, E415, and H420 each contribute to the substrate site. Position 361 (D361) interacts with Zn(2+). H420 serves as a coordination point for Zn(2+).

Belongs to the histidinol dehydrogenase family. Zn(2+) serves as cofactor.

It catalyses the reaction L-histidinol + 2 NAD(+) + H2O = L-histidine + 2 NADH + 3 H(+). It functions in the pathway amino-acid biosynthesis; L-histidine biosynthesis; L-histidine from 5-phospho-alpha-D-ribose 1-diphosphate: step 9/9. Catalyzes the sequential NAD-dependent oxidations of L-histidinol to L-histidinaldehyde and then to L-histidine. The protein is Histidinol dehydrogenase of Rhodopseudomonas palustris (strain ATCC BAA-98 / CGA009).